Here is a 616-residue protein sequence, read N- to C-terminus: Endonuclease 8-like 3 (616 aa).

The FPG-type zinc finger occupies 271-305; the sequence is KVYKRPNCGQCGTKITVCRLGEHNRMTYFCPKCQK. The RanBP2-type zinc-finger motif lies at 341 to 370; it reads KEEHWACAVCTLINKPSDKQCDACLTLRPE. The tract at residues 491 to 524 is disordered; the sequence is LKTGHTTSNTIHLSSTISSPQSKMTGDAAAKTGN. The segment covering 494–514 has biased composition (polar residues); sequence GHTTSNTIHLSSTISSPQSKM. Residues C527, H530, C553, C561, C574, H576, C599, and C607 each coordinate Zn(2+). 2 GRF-type zinc fingers span residues 527-570 and 574-616; these read CSAH…ADLH and CNHG…AKTE.

Belongs to the FPG family.

It is found in the nucleus. The protein localises to the chromosome. It carries out the reaction 2'-deoxyribonucleotide-(2'-deoxyribose 5'-phosphate)-2'-deoxyribonucleotide-DNA = a 3'-end 2'-deoxyribonucleotide-(2,3-dehydro-2,3-deoxyribose 5'-phosphate)-DNA + a 5'-end 5'-phospho-2'-deoxyribonucleoside-DNA + H(+). Its function is as follows. DNA glycosylase which prefers single-stranded DNA (ssDNA), or partially ssDNA structures such as bubble and fork structures, to double-stranded DNA (dsDNA). Mediates interstrand cross-link repair in response to replication stress: recruited to replication stress sites via interaction with ubiquitinated CMG helicase and acts by mediating DNA glycosylase activity. Cleaves one of the two N-glycosyl bonds comprising the interstrand cross-link, which avoids the formation of a double-strand break but generates an abasic site that is bypassed by translesion synthesis polymerases. This is Endonuclease 8-like 3 from Xenopus laevis (African clawed frog).